The chain runs to 528 residues: Ceramide glucosyltransferase (528 aa).

Over 1-6 the chain is Lumenal; sequence MYSFIE. The helical transmembrane segment at 7–27 threads the bilayer; sequence CIAGALFVLGCVVVTLVVIGV. Residues 28 to 369 are Cytoplasmic-facing; sequence RALLYNFRNR…TVLSATILEP (342 aa). Position 94 (Asp94) is a short sequence motif, D1. Position 154 (Asp154) is a short sequence motif, D2. Asp308 is a short sequence motif (D3). Asp308 (proton acceptor) is an active-site residue. Positions 349–353 match the (Q/R)XXRW motif; the sequence is RRSRW. A helical membrane pass occupies residues 370–390; it reads FTECFLFATYMSLAMTTIPVL. The Lumenal segment spans residues 391-402; it reads SQNLGIPKTWNA. The helical transmembrane segment at 403-423 threads the bilayer; sequence TAIAWFTITTLWMLIDYIGYL. At 424–457 the chain is on the cytoplasmic side; it reads RLHSGVTMEVDEHTPYFAKGFKNTGGIKRRPFLE. Residues 458 to 478 traverse the membrane as a helical segment; it reads FLAAWIGREGLAFPVWAYAVV. At 479-528 the chain is on the lumenal side; sequence FGNTVNWRGRLFYIHWDTTVDAVEPREERTREVRTPELERGPSRNKHRVD. The interval 503–528 is disordered; the sequence is PREERTREVRTPELERGPSRNKHRVD.

It belongs to the glycosyltransferase 2 family.

Its subcellular location is the golgi apparatus membrane. It catalyses the reaction an N-acylsphing-4-enine + UDP-alpha-D-glucose = a beta-D-glucosyl-(1&lt;-&gt;1')-N-acylsphing-4-enine + UDP + H(+). The protein operates within lipid metabolism; sphingolipid metabolism. In terms of biological role, catalyzes the final step in the biosynthesis of the membrane lipid glucosylceramide (GluCer), the transfer of glucose to ceramide. Glucosylceramides play important roles in growth, differentiation and pathogenicity. Contribution to fungal pathogenesis is host-dependent. This chain is Ceramide glucosyltransferase, found in Gibberella zeae (strain ATCC MYA-4620 / CBS 123657 / FGSC 9075 / NRRL 31084 / PH-1) (Wheat head blight fungus).